Reading from the N-terminus, the 252-residue chain is Triosephosphate isomerase (252 aa).

8 to 10 (NWK) serves as a coordination point for substrate. His95 functions as the Electrophile in the catalytic mechanism. Glu167 functions as the Proton acceptor in the catalytic mechanism. Substrate-binding positions include Gly173, Ser212, and 233-234 (GG).

The protein belongs to the triosephosphate isomerase family. Homodimer.

It is found in the cytoplasm. The catalysed reaction is D-glyceraldehyde 3-phosphate = dihydroxyacetone phosphate. It functions in the pathway carbohydrate biosynthesis; gluconeogenesis. The protein operates within carbohydrate degradation; glycolysis; D-glyceraldehyde 3-phosphate from glycerone phosphate: step 1/1. Its function is as follows. Involved in the gluconeogenesis. Catalyzes stereospecifically the conversion of dihydroxyacetone phosphate (DHAP) to D-glyceraldehyde-3-phosphate (G3P). This chain is Triosephosphate isomerase, found in Lawsonia intracellularis (strain PHE/MN1-00).